The chain runs to 446 residues: Peptide chain release factor 1, mitochondrial (446 aa).

Residues 1–62 constitute a mitochondrion transit peptide; it reads MSHHLCIWLF…LLNKSWSRGC (62 aa). The GGQ domain stretch occupies residues 298-362; the sequence is PKDLRVDTFR…LRARLYQQII (65 aa). Positions 312–314 match the GGQ motif; it reads GGQ. Position 314 is an N5-methylglutamine (Q314).

It belongs to the prokaryotic/mitochondrial release factor family. In terms of processing, methylation of glutamine in the GGQ triplet by HEMK1 is conserved from bacteria to mammals.

The protein localises to the mitochondrion. In terms of biological role, mitochondrial peptide chain release factor that directs the termination of translation in response to the peptide chain non-canonical stop codons AGG and AGA. Non-canonical termination codons AGG and AGA are found at the end of MT-CO1/COX1 and MT-ND6/ND6 open reading frames, respectively. Recognizes non-canonical stop codons via a network of interactions between the codon, MTRF1 and the ribosomal RNA (rRNA): in contrast to other translation release factors, which identify the codon in the A-site via direct interactions of amino acid side chains with the bases, MTRF1 repositions the first 2 bases of the stop codon to use an intricate network of interactions that includes residues of the release factor, the rRNA of the small ribosomal subunit, as well as neighboring bases of the mRNA. In Mus musculus (Mouse), this protein is Peptide chain release factor 1, mitochondrial.